A 665-amino-acid polypeptide reads, in one-letter code: Transketolase 1 (665 aa).

H26 contributes to the substrate binding site. Residues H66 and 114–116 (GPL) each bind thiamine diphosphate. D155 is a binding site for Mg(2+). Thiamine diphosphate-binding residues include G156 and N185. N185 and I187 together coordinate Mg(2+). 3 residues coordinate substrate: H261, R358, and S385. H261 is a thiamine diphosphate binding site. Catalysis depends on E412, which acts as the Proton donor. F438 provides a ligand contact to thiamine diphosphate. Residues H462, D470, and R521 each contribute to the substrate site.

The protein belongs to the transketolase family. Homodimer. Mg(2+) serves as cofactor. It depends on Ca(2+) as a cofactor. Mn(2+) is required as a cofactor. The cofactor is Co(2+). Requires thiamine diphosphate as cofactor.

The catalysed reaction is D-sedoheptulose 7-phosphate + D-glyceraldehyde 3-phosphate = aldehydo-D-ribose 5-phosphate + D-xylulose 5-phosphate. Its function is as follows. Catalyzes the transfer of a two-carbon ketol group from a ketose donor to an aldose acceptor, via a covalent intermediate with the cofactor thiamine pyrophosphate. The sequence is that of Transketolase 1 (tkt1) from Vibrio cholerae serotype O1 (strain ATCC 39315 / El Tor Inaba N16961).